A 742-amino-acid chain; its full sequence is Collectin-12 (742 aa).

The Cytoplasmic portion of the chain corresponds to 1–37 (MKDDFAEEEEVQSFGYKRFGIQEGTQCTKCKNNWALK). A helical; Signal-anchor for type II membrane protein membrane pass occupies residues 38–58 (FSIILLYILCALLTITVAILG). At 59–742 (YKVVEKMDNV…DRETVLSSAL (684 aa)) the chain is on the extracellular side. A glycan (N-linked (GlcNAc...) asparagine) is linked at N67. Positions 73–141 (ETSRQTYDDK…NKDTLEKLQA (69 aa)) form a coiled coil. N159, N168, and N271 each carry an N-linked (GlcNAc...) asparagine glycan. Residues 215 to 328 (QQRNLITNLQ…KDAENRTAIK (114 aa)) are a coiled coil. Positions 439-608 (TILQGPPGPR…TPAPEDNGCP (170 aa)) are disordered. Collagen-like domains are found at residues 443-472 (GPPGPRGPRGDRGSQGPPGPTGNKGQKGEK), 473-529 (GEPG…PGPP), and 530-589 (GPPG…SGAV). 2 stretches are compositionally biased toward low complexity: residues 502-525 (KGSQGPKGSRGSPGKPGPQGSSGD) and 534-556 (KEGLPGPQGPPGFQGLQGTVGEP). Pro residues predominate over residues 571–585 (PGMPGPKGPPGPPGP). Intrachain disulfides connect C607-C618, C635-C730, and C708-C722. A C-type lectin domain is found at 614 to 731 (FTDKCYYFSV…CEDVNNFICE (118 aa)). Residues F644, N646, E650, D670, and E674 each coordinate Ca(2+). Positions 691, 694, and 696 each coordinate a carbohydrate. Ca(2+)-binding residues include Q694, D696, N697, E706, D707, N718, D719, and E731. E706 contacts a carbohydrate. A carbohydrate is bound by residues N718 and D719.

In terms of assembly, the extracellular domain forms a stable trimer. The extracellular domain interacts with fibrillar amyloid-beta peptide. Expressed in perivascular macrophages. Expressed in plaques-surrounding reactive astrocytes and in perivascular astrocytes associated with cerebral amyloid angiopathy (CAA) in the temporal cortex of Alzheimer patient (at protein level). Strongly expressed in placenta. Moderately expressed in heart, skeletal muscle, small intestine and lung. Weakly expressed in brain, colon, thymus and kidney. Expressed in nurse-like cells. Expressed in reactive astrocytes and vascular/perivascular cells in the brain of Alzheimer patient.

It is found in the membrane. In terms of biological role, scavenger receptor that displays several functions associated with host defense. Promotes binding and phagocytosis of Gram-positive, Gram-negative bacteria and yeast. Mediates the recognition, internalization and degradation of oxidatively modified low density lipoprotein (oxLDL) by vascular endothelial cells. Binds to several carbohydrates including Gal-type ligands, D-galactose, L- and D-fucose, GalNAc, T and Tn antigens in a calcium-dependent manner and internalizes specifically GalNAc in nurse-like cells. Also binds to sialyl Lewis X or a trisaccharide and asialo-orosomucoid (ASOR). May also play a role in the clearance of amyloid-beta in Alzheimer disease. The protein is Collectin-12 (COLEC12) of Homo sapiens (Human).